We begin with the raw amino-acid sequence, 391 residues long: Phosphopentomutase (391 aa).

Aspartate 14 lines the Mn(2+) pocket. Residues 61–88 (IQGVPPDPAPTAFHGRMAERSEGKDTTT) are disordered. A compositionally biased stretch (basic and acidic residues) spans 76–87 (RMAERSEGKDTT). 5 residues coordinate Mn(2+): aspartate 286, histidine 291, aspartate 327, histidine 328, and histidine 339.

This sequence belongs to the phosphopentomutase family. Requires Mn(2+) as cofactor.

It is found in the cytoplasm. It catalyses the reaction 2-deoxy-alpha-D-ribose 1-phosphate = 2-deoxy-D-ribose 5-phosphate. It carries out the reaction alpha-D-ribose 1-phosphate = D-ribose 5-phosphate. It functions in the pathway carbohydrate degradation; 2-deoxy-D-ribose 1-phosphate degradation; D-glyceraldehyde 3-phosphate and acetaldehyde from 2-deoxy-alpha-D-ribose 1-phosphate: step 1/2. Its function is as follows. Isomerase that catalyzes the conversion of deoxy-ribose 1-phosphate (dRib-1-P) and ribose 1-phosphate (Rib-1-P) to deoxy-ribose 5-phosphate (dRib-5-P) and ribose 5-phosphate (Rib-5-P), respectively. The protein is Phosphopentomutase of Anaeromyxobacter dehalogenans (strain 2CP-C).